The sequence spans 236 residues: Ribose-5-phosphate isomerase A (236 aa).

Residues 31–34 (TGST), 88–91 (DGAD), and 101–104 (KGGG) each bind substrate. Residue glutamate 110 is the Proton acceptor of the active site. Lysine 128 is a binding site for substrate.

It belongs to the ribose 5-phosphate isomerase family. Homodimer.

It catalyses the reaction aldehydo-D-ribose 5-phosphate = D-ribulose 5-phosphate. It participates in carbohydrate degradation; pentose phosphate pathway; D-ribose 5-phosphate from D-ribulose 5-phosphate (non-oxidative stage): step 1/1. In terms of biological role, catalyzes the reversible conversion of ribose-5-phosphate to ribulose 5-phosphate. The protein is Ribose-5-phosphate isomerase A of Thermosynechococcus vestitus (strain NIES-2133 / IAM M-273 / BP-1).